The chain runs to 345 residues: N-acetyl-gamma-glutamyl-phosphate reductase (345 aa).

Residue cysteine 149 is part of the active site.

This sequence belongs to the NAGSA dehydrogenase family. Type 1 subfamily.

The protein localises to the cytoplasm. It carries out the reaction N-acetyl-L-glutamate 5-semialdehyde + phosphate + NADP(+) = N-acetyl-L-glutamyl 5-phosphate + NADPH + H(+). Its pathway is amino-acid biosynthesis; L-arginine biosynthesis; N(2)-acetyl-L-ornithine from L-glutamate: step 3/4. In terms of biological role, catalyzes the NADPH-dependent reduction of N-acetyl-5-glutamyl phosphate to yield N-acetyl-L-glutamate 5-semialdehyde. The sequence is that of N-acetyl-gamma-glutamyl-phosphate reductase from Bacillus cereus (strain ATCC 10987 / NRS 248).